Reading from the N-terminus, the 181-residue chain is UPF0397 protein SUB0313 (181 aa).

Transmembrane regions (helical) follow at residues 11–31 (AIGI…ITIF), 45–65 (LFSV…GHML), 69–89 (FAGY…GLGI), 114–134 (VQAL…DILI), and 147–167 (LFAA…LLIA).

It belongs to the UPF0397 family.

It localises to the cell membrane. This is UPF0397 protein SUB0313 from Streptococcus uberis (strain ATCC BAA-854 / 0140J).